Here is a 446-residue protein sequence, read N- to C-terminus: Nucleoprotein (446 aa).

Residues 1–54 (MSFTPGKQSSSRASSGNRAGNGILKWADQSDQSSNFQTRGRRAQPKQTATSQPA) form a disordered region. Over residues 9 to 22 (SSSRASSGNRAGNG) the composition is skewed to low complexity. Polar residues-rich tracts occupy residues 29–38 (QSDQSSNFQT) and 45–54 (PKQTATSQPA). An RNA-binding region spans residues 52-193 (QPAGGNVVPY…GYYIEGSGRS (142 aa)). The region spanning 60-189 (PYYSWFSGIT…VLPQGYYIEG (130 aa)) is the CoV N NTD domain. RNA-binding residues include Arg105, Arg121, and Arg163. Disordered regions lie at residues 157 to 230 (PADV…VTSD), 265 to 290 (ILNK…KRGP), and 381 to 446 (QQDD…NSEM). Ser166 carries the phosphoserine; by host modification. Thr173 bears the Phosphothreonine; by host mark. Ser190 carries the phosphoserine; by host modification. Low complexity predominate over residues 195–226 (PNSRSTSRASSRASSAGSRNRSNSGTRTPTSG). Residues 258–383 (AKEVRQKILN…ENLNAYQQQD (126 aa)) enclose the CoV N CTD domain. The segment covering 265 to 275 (ILNKPRQKRSP) has biased composition (basic residues). Residues 265-384 (ILNKPRQKRS…NLNAYQQQDD (120 aa)) are dimerization. 2 positions are modified to phosphoserine; by host: Ser389 and Ser421. At Thr425 the chain carries Phosphothreonine; by host.

The protein belongs to the betacoronavirus nucleocapsid protein family. In terms of assembly, homooligomer. Both monomeric and oligomeric forms interact with RNA. Interacts with protein M. Interacts with NSP3; this interaction serves to tether the genome to the newly translated replicase-transcriptase complex at a very early stage of infection. ADP-ribosylated. The ADP-ribosylation is retained in the virion during infection. Post-translationally, phosphorylated on serine and threonine residues.

Its subcellular location is the virion. The protein localises to the host endoplasmic reticulum-Golgi intermediate compartment. It localises to the host Golgi apparatus. In terms of biological role, packages the positive strand viral genome RNA into a helical ribonucleocapsid (RNP) and plays a fundamental role during virion assembly through its interactions with the viral genome and membrane protein M. Plays an important role in enhancing the efficiency of subgenomic viral RNA transcription as well as viral replication. The protein is Nucleoprotein of Equine coronavirus (isolate NC99) (ECoV).